The primary structure comprises 311 residues: Cadmium, cobalt and zinc/H(+)-K(+) antiporter (311 aa).

Over methionine 1–lysine 12 the chain is Extracellular. Residues valine 13–phenylalanine 33 traverse the membrane as a helical segment. Residues leucine 34–aspartate 43 lie on the Cytoplasmic side of the membrane. Residues alanine 44–alanine 64 traverse the membrane as a helical segment. Over glutamate 65–arginine 78 the chain is Extracellular. A helical transmembrane segment spans residues phenylalanine 79 to isoleucine 99. Residues tyrosine 100–threonine 115 lie on the Cytoplasmic side of the membrane. A helical transmembrane segment spans residues glycine 116–methionine 136. Topologically, residues serine 137–aspartate 157 are extracellular. The helical transmembrane segment at methionine 158–tryptophan 178 threads the bilayer. The Cytoplasmic portion of the chain corresponds to alanine 179–histidine 311.

It belongs to the cation diffusion facilitator (CDF) transporter (TC 2.A.4) family. SLC30A subfamily.

The protein localises to the cell membrane. Involved in divalent cation and potassium homeostasis in the cell. Catalyzes the active efflux of zinc, cadmium and cobalt, in exchange for potassium and H(+) ions. In Bacillus subtilis (strain 168), this protein is Cadmium, cobalt and zinc/H(+)-K(+) antiporter (czcD).